A 113-amino-acid polypeptide reads, in one-letter code: Large ribosomal subunit protein uL22 (113 aa).

It belongs to the universal ribosomal protein uL22 family. In terms of assembly, part of the 50S ribosomal subunit.

In terms of biological role, this protein binds specifically to 23S rRNA; its binding is stimulated by other ribosomal proteins, e.g. L4, L17, and L20. It is important during the early stages of 50S assembly. It makes multiple contacts with different domains of the 23S rRNA in the assembled 50S subunit and ribosome. Functionally, the globular domain of the protein is located near the polypeptide exit tunnel on the outside of the subunit, while an extended beta-hairpin is found that lines the wall of the exit tunnel in the center of the 70S ribosome. This Xanthomonas axonopodis pv. citri (strain 306) protein is Large ribosomal subunit protein uL22.